A 765-amino-acid polypeptide reads, in one-letter code: Phosphoribosylformylglycinamidine synthase subunit PurL (765 aa).

His-41 is a catalytic residue. 2 residues coordinate ATP: Tyr-44 and Lys-83. Position 85 (Glu-85) interacts with Mg(2+). Substrate-binding positions include 86 to 89 (SHNH) and Arg-108. His-87 (proton acceptor) is an active-site residue. Position 109 (Asp-109) interacts with Mg(2+). Gln-232 contributes to the substrate binding site. Residue Asp-260 participates in Mg(2+) binding. 304-306 (ESQ) contributes to the substrate binding site. Asp-503 and Gly-540 together coordinate ATP. Asn-541 contacts Mg(2+). Substrate is bound at residue Ser-543.

This sequence belongs to the FGAMS family. Monomer. Part of the FGAM synthase complex composed of 1 PurL, 1 PurQ and 2 PurS subunits.

It is found in the cytoplasm. It catalyses the reaction N(2)-formyl-N(1)-(5-phospho-beta-D-ribosyl)glycinamide + L-glutamine + ATP + H2O = 2-formamido-N(1)-(5-O-phospho-beta-D-ribosyl)acetamidine + L-glutamate + ADP + phosphate + H(+). The protein operates within purine metabolism; IMP biosynthesis via de novo pathway; 5-amino-1-(5-phospho-D-ribosyl)imidazole from N(2)-formyl-N(1)-(5-phospho-D-ribosyl)glycinamide: step 1/2. In terms of biological role, part of the phosphoribosylformylglycinamidine synthase complex involved in the purines biosynthetic pathway. Catalyzes the ATP-dependent conversion of formylglycinamide ribonucleotide (FGAR) and glutamine to yield formylglycinamidine ribonucleotide (FGAM) and glutamate. The FGAM synthase complex is composed of three subunits. PurQ produces an ammonia molecule by converting glutamine to glutamate. PurL transfers the ammonia molecule to FGAR to form FGAM in an ATP-dependent manner. PurS interacts with PurQ and PurL and is thought to assist in the transfer of the ammonia molecule from PurQ to PurL. The polypeptide is Phosphoribosylformylglycinamidine synthase subunit PurL (Synechococcus sp. (strain WH7803)).